Consider the following 455-residue polypeptide: Ribosomal protein uS12 methylthiotransferase RimO (455 aa).

The 111-residue stretch at 30-140 folds into the MTTase N-terminal domain; the sequence is PTIGMVSLGC…VLDAVHGAVP (111 aa). Positions 39, 75, 104, 171, 175, and 178 each coordinate [4Fe-4S] cluster. The 230-residue stretch at 157 to 386 folds into the Radical SAM core domain; sequence LTPRHFSYLK…MEKAQAISEA (230 aa). The TRAM domain maps to 389–455; sequence AAKVGRRIEV…GEYDLWGRPV (67 aa).

Belongs to the methylthiotransferase family. RimO subfamily. [4Fe-4S] cluster serves as cofactor.

The protein resides in the cytoplasm. The enzyme catalyses L-aspartate(89)-[ribosomal protein uS12]-hydrogen + (sulfur carrier)-SH + AH2 + 2 S-adenosyl-L-methionine = 3-methylsulfanyl-L-aspartate(89)-[ribosomal protein uS12]-hydrogen + (sulfur carrier)-H + 5'-deoxyadenosine + L-methionine + A + S-adenosyl-L-homocysteine + 2 H(+). In terms of biological role, catalyzes the methylthiolation of an aspartic acid residue of ribosomal protein uS12. The chain is Ribosomal protein uS12 methylthiotransferase RimO from Cereibacter sphaeroides (strain ATCC 17029 / ATH 2.4.9) (Rhodobacter sphaeroides).